A 337-amino-acid chain; its full sequence is Inositol 2-dehydrogenase (337 aa).

It belongs to the Gfo/Idh/MocA family. As to quaternary structure, homotetramer.

It catalyses the reaction myo-inositol + NAD(+) = scyllo-inosose + NADH + H(+). In terms of biological role, involved in the oxidation of myo-inositol (MI) to 2-keto-myo-inositol (2KMI or 2-inosose). This chain is Inositol 2-dehydrogenase, found in Burkholderia cenocepacia (strain HI2424).